The chain runs to 98 residues: Prolactin-releasing peptide (98 aa).

The signal sequence occupies residues 1 to 22 (MKAVGAWLLCLLLLGLALQGAA). Phe-53 bears the Phenylalanine amide mark. A propeptide spanning residues 58–98 (AAPGDGPRPGPRRELACIPLEGGAEPSRALLGRLTAQLVQE) is cleaved from the precursor.

In terms of tissue distribution, more abundantly expressed in the brainstem than the hypothalamus.

It localises to the secreted. Its function is as follows. Stimulates prolactin (PRL) release and regulates the expression of prolactin through its receptor GPR10. May stimulate lactotrophs directly to secrete PRL. This chain is Prolactin-releasing peptide (PRLH), found in Ovis aries (Sheep).